The sequence spans 443 residues: Phosphoglucosamine mutase (443 aa).

S102 acts as the Phosphoserine intermediate in catalysis. Mg(2+) contacts are provided by S102, D241, D243, and D245. S102 is subject to Phosphoserine.

Belongs to the phosphohexose mutase family. Mg(2+) serves as cofactor. In terms of processing, activated by phosphorylation.

The enzyme catalyses alpha-D-glucosamine 1-phosphate = D-glucosamine 6-phosphate. In terms of biological role, catalyzes the conversion of glucosamine-6-phosphate to glucosamine-1-phosphate. The chain is Phosphoglucosamine mutase from Albidiferax ferrireducens (strain ATCC BAA-621 / DSM 15236 / T118) (Rhodoferax ferrireducens).